Here is a 199-residue protein sequence, read N- to C-terminus: Transmembrane protein 223 (199 aa).

Over 1–43 (MVASVPLRNVSHLLSVLRSQNVPRYLQNGVPRDVLLFRHERGR) the chain is Mitochondrial matrix. The chain crosses the membrane as a helical span at residues 44 to 64 (FFAILGLFCAGQGIFWTSLAV). At 65–94 (AALSRPLSRVPAEAPNRSYQDLRSALWRYG) the chain is on the mitochondrial intermembrane side. A helical transmembrane segment spans residues 95–115 (LAVGCGTMGVLVLGAGLLYSL). Residues 116-199 (RSVRSVMLLA…DNTVGAYRSL (84 aa)) are Mitochondrial matrix-facing.

The protein belongs to the TMEM223 family. Associates with the mitochondrial ribosome.

Its subcellular location is the mitochondrion inner membrane. Its function is as follows. Mitochondrial ribosome-associated protein involved in the first steps of cytochrome c oxidase complex (complex IV) biogenesis. Stimulates the translation of MT-CO1 mRNA and is a constituent of early MT-CO1 assembly intermediates. The polypeptide is Transmembrane protein 223 (Mus musculus (Mouse)).